We begin with the raw amino-acid sequence, 138 residues long: ATP synthase epsilon chain (138 aa).

The protein belongs to the ATPase epsilon chain family. In terms of assembly, F-type ATPases have 2 components, CF(1) - the catalytic core - and CF(0) - the membrane proton channel. CF(1) has five subunits: alpha(3), beta(3), gamma(1), delta(1), epsilon(1). CF(0) has three main subunits: a, b and c.

The protein resides in the cell membrane. Functionally, produces ATP from ADP in the presence of a proton gradient across the membrane. The protein is ATP synthase epsilon chain of Streptococcus equi subsp. equi (strain 4047).